An 840-amino-acid polypeptide reads, in one-letter code: Heat shock 70 kDa protein 4 (840 aa).

Residue lysine 53 is modified to N6-acetyllysine. Phosphoserine is present on serine 76. Tyrosine 89 and tyrosine 336 each carry phosphotyrosine. Phosphoserine is present on residues serine 393 and serine 415. Lysine 430 bears the N6-acetyllysine mark. Residues 500 to 575 (VHKSEENEEP…QAKKAKVKTS (76 aa)) form a disordered region. Residues 514 to 533 (QNAKEEEKMQVDQEEPHVEE) are compositionally biased toward basic and acidic residues. Residue threonine 538 is modified to Phosphothreonine. Phosphoserine occurs at positions 546 and 647. Tyrosine 660 bears the Phosphotyrosine mark. An N6-acetyllysine modification is found at lysine 679. Serine 756 carries the post-translational modification Phosphoserine. Position 773 is an N6-methyllysine (lysine 773). Positions 783–840 (ISKPKPKVEPPKEEQKNAEQNGPVDGQGDNPGPQAAEQGTDAAVPSDSDKKLPEMDID) are disordered. Composition is skewed to basic and acidic residues over residues 788-799 (PKVEPPKEEQKN) and 829-840 (DSDKKLPEMDID).

The protein belongs to the heat shock protein 70 family. As to quaternary structure, interacts with TJP1/ZO-1.

Its subcellular location is the cytoplasm. The sequence is that of Heat shock 70 kDa protein 4 (HSPA4) from Pongo abelii (Sumatran orangutan).